The primary structure comprises 517 residues: V-type proton ATPase subunit B (517 aa).

At Ser-4 the chain carries Phosphoserine. Lys-14 participates in a covalent cross-link: Glycyl lysine isopeptide (Lys-Gly) (interchain with G-Cter in ubiquitin). Residue Ser-137 is modified to Phosphoserine. Arg-381 contacts ATP. Positions 487-517 are disordered; that stretch reads RARDDADEDEEDPDTRSSGKKKDASQEESLI. Over residues 500–511 the composition is skewed to basic and acidic residues; sequence DTRSSGKKKDAS. Phosphoserine occurs at positions 503 and 504. Lys-508 participates in a covalent cross-link: Glycyl lysine isopeptide (Lys-Gly) (interchain with G-Cter in ubiquitin). Ser-511 bears the Phosphoserine; by ATM or ATR mark. Residue Ser-515 is modified to Phosphoserine.

This sequence belongs to the ATPase alpha/beta chains family. As to quaternary structure, V-ATPase is a heteromultimeric enzyme composed of a peripheral catalytic V1 complex (components A to H) attached to an integral membrane V0 proton pore complex (components: a, c, c', c'', d, e, f and VOA1). Interacts with RAV1 and RAV2 components of the RAVE complex, which are essential for the stability and assembly of V-ATPase.

The protein resides in the vacuole membrane. Functionally, non-catalytic subunit of the V1 complex of vacuolar(H+)-ATPase (V-ATPase), a multisubunit enzyme composed of a peripheral complex (V1) that hydrolyzes ATP and a membrane integral complex (V0) that translocates protons. V-ATPase is responsible for acidifying and maintaining the pH of intracellular compartments. This chain is V-type proton ATPase subunit B (VMA2), found in Saccharomyces cerevisiae (strain ATCC 204508 / S288c) (Baker's yeast).